The primary structure comprises 508 residues: Mitochondrial distribution and morphology protein 10 (508 aa).

The segment at 160 to 195 is disordered; sequence PAHPTSTRPTPPQTPPSHTRQPSEPSTPAPSPTPGN.

It belongs to the MDM10 family. Component of the ER-mitochondria encounter structure (ERMES) or MDM complex, composed of MMM1, MDM10, MDM12 and MDM34. Associates with the mitochondrial outer membrane sorting assembly machinery SAM(core) complex.

Its subcellular location is the mitochondrion outer membrane. Component of the ERMES/MDM complex, which serves as a molecular tether to connect the endoplasmic reticulum and mitochondria. Components of this complex are involved in the control of mitochondrial shape and protein biogenesis and may function in phospholipid exchange. MDM10 is involved in the late assembly steps of the general translocase of the mitochondrial outer membrane (TOM complex). Functions in the TOM40-specific route of the assembly of outer membrane beta-barrel proteins, including the association of TOM40 with the receptor TOM22 and small TOM proteins. Can associate with the SAM(core) complex as well as the MDM12-MMM1 complex, both involved in late steps of the major beta-barrel assembly pathway, that is responsible for biogenesis of all outer membrane beta-barrel proteins. May act as a switch that shuttles between both complexes and channels precursor proteins into the TOM40-specific pathway. Plays a role in mitochondrial morphology and in the inheritance of mitochondria. In Cryptococcus neoformans var. neoformans serotype D (strain JEC21 / ATCC MYA-565) (Filobasidiella neoformans), this protein is Mitochondrial distribution and morphology protein 10.